The following is a 184-amino-acid chain: Photosystem I assembly protein Ycf4 (184 aa).

2 helical membrane passes run 19 to 39 (ISNF…LLVG) and 57 to 77 (IVFF…LFIS).

The protein belongs to the Ycf4 family.

The protein localises to the plastid. It localises to the chloroplast thylakoid membrane. Its function is as follows. Seems to be required for the assembly of the photosystem I complex. The polypeptide is Photosystem I assembly protein Ycf4 (Nymphaea alba (White water-lily)).